A 238-amino-acid chain; its full sequence is Large ribosomal subunit protein uL2 (238 aa).

Residues 200–238 (HGGGLHQSVSRPSTVSRNAPPGRKVGHIAARRTGRKEGK) form a disordered region. The span at 206–216 (QSVSRPSTVSR) shows a compositional bias: polar residues. The segment covering 223–238 (KVGHIAARRTGRKEGK) has biased composition (basic residues).

The protein belongs to the universal ribosomal protein uL2 family. As to quaternary structure, part of the 50S ribosomal subunit. Forms a bridge to the 30S subunit in the 70S ribosome.

One of the primary rRNA binding proteins. Required for association of the 30S and 50S subunits to form the 70S ribosome, for tRNA binding and peptide bond formation. It has been suggested to have peptidyltransferase activity; this is somewhat controversial. Makes several contacts with the 16S rRNA in the 70S ribosome. The polypeptide is Large ribosomal subunit protein uL2 (Saccharolobus islandicus (strain L.S.2.15 / Lassen #1) (Sulfolobus islandicus)).